A 210-amino-acid polypeptide reads, in one-letter code: Large ribosomal subunit protein uL4 (210 aa).

Residues 57-78 (VSGGGAKPWKQKGTGRARAGSN) are disordered.

The protein belongs to the universal ribosomal protein uL4 family. As to quaternary structure, part of the 50S ribosomal subunit.

Functionally, one of the primary rRNA binding proteins, this protein initially binds near the 5'-end of the 23S rRNA. It is important during the early stages of 50S assembly. It makes multiple contacts with different domains of the 23S rRNA in the assembled 50S subunit and ribosome. In terms of biological role, forms part of the polypeptide exit tunnel. The chain is Large ribosomal subunit protein uL4 from Desulfovibrio desulfuricans (strain ATCC 27774 / DSM 6949 / MB).